Here is a 359-residue protein sequence, read N- to C-terminus: tRNA/tmRNA (uracil-C(5))-methyltransferase (359 aa).

Residues Q183, Y211, N216, E232, and D292 each coordinate S-adenosyl-L-methionine. Residue C317 is the Nucleophile of the active site. The Proton acceptor role is filled by E351.

This sequence belongs to the class I-like SAM-binding methyltransferase superfamily. RNA M5U methyltransferase family. TrmA subfamily.

The catalysed reaction is uridine(54) in tRNA + S-adenosyl-L-methionine = 5-methyluridine(54) in tRNA + S-adenosyl-L-homocysteine + H(+). It catalyses the reaction uridine(341) in tmRNA + S-adenosyl-L-methionine = 5-methyluridine(341) in tmRNA + S-adenosyl-L-homocysteine + H(+). Its function is as follows. Dual-specificity methyltransferase that catalyzes the formation of 5-methyluridine at position 54 (m5U54) in all tRNAs, and that of position 341 (m5U341) in tmRNA (transfer-mRNA). In Pseudomonas fluorescens (strain ATCC BAA-477 / NRRL B-23932 / Pf-5), this protein is tRNA/tmRNA (uracil-C(5))-methyltransferase.